We begin with the raw amino-acid sequence, 388 residues long: 4-hydroxy-3-methylbut-2-en-1-yl diphosphate synthase (flavodoxin) (388 aa).

The disordered stretch occupies residues Met1–Thr22. [4Fe-4S] cluster is bound by residues Cys281, Cys284, Cys316, and Glu323.

The protein belongs to the IspG family. It depends on [4Fe-4S] cluster as a cofactor.

The enzyme catalyses (2E)-4-hydroxy-3-methylbut-2-enyl diphosphate + oxidized [flavodoxin] + H2O + 2 H(+) = 2-C-methyl-D-erythritol 2,4-cyclic diphosphate + reduced [flavodoxin]. It participates in isoprenoid biosynthesis; isopentenyl diphosphate biosynthesis via DXP pathway; isopentenyl diphosphate from 1-deoxy-D-xylulose 5-phosphate: step 5/6. Functionally, converts 2C-methyl-D-erythritol 2,4-cyclodiphosphate (ME-2,4cPP) into 1-hydroxy-2-methyl-2-(E)-butenyl 4-diphosphate. This chain is 4-hydroxy-3-methylbut-2-en-1-yl diphosphate synthase (flavodoxin), found in Kocuria rhizophila (strain ATCC 9341 / DSM 348 / NBRC 103217 / DC2201).